The sequence spans 376 residues: Alanine racemase (376 aa).

Residue Lys40 is the Proton acceptor; specific for D-alanine of the active site. Position 40 is an N6-(pyridoxal phosphate)lysine (Lys40). Arg138 contributes to the substrate binding site. Residue Tyr270 is the Proton acceptor; specific for L-alanine of the active site. Met317 provides a ligand contact to substrate.

Belongs to the alanine racemase family. It depends on pyridoxal 5'-phosphate as a cofactor.

It catalyses the reaction L-alanine = D-alanine. Its pathway is amino-acid biosynthesis; D-alanine biosynthesis; D-alanine from L-alanine: step 1/1. Catalyzes the interconversion of L-alanine and D-alanine. May also act on other amino acids. This chain is Alanine racemase (alr), found in Lactobacillus acidophilus (strain ATCC 700396 / NCK56 / N2 / NCFM).